The chain runs to 324 residues: Protease HtpX homolog (324 aa).

2 consecutive transmembrane segments (helical) span residues 7–24 (ALLLAGLTALFMGVGYLI) and 29–46 (GALIALVVAAAMNIFTYW). Zn(2+) is bound at residue histidine 130. Glutamate 131 is an active-site residue. Histidine 134 contributes to the Zn(2+) binding site. Helical transmembrane passes span 145 to 165 (ITATIAGAISMVAQFGMFFGG) and 172 to 192 (GPGLIGSLALMILAPLGAMLV). Glutamate 201 lines the Zn(2+) pocket. Polar residues predominate over residues 288-305 (PASTFSRGAGTAASSGTP). The disordered stretch occupies residues 288–324 (PASTFSRGAGTAASSGTPRGTGRSPWGGQPRGRGPWG).

The protein belongs to the peptidase M48B family. Zn(2+) is required as a cofactor.

Its subcellular location is the cell inner membrane. This chain is Protease HtpX homolog, found in Rhodopseudomonas palustris (strain TIE-1).